Consider the following 128-residue polypeptide: Sulfurtransferase TusD (128 aa).

Cys-78 (cysteine persulfide intermediate) is an active-site residue.

Belongs to the DsrE/TusD family. In terms of assembly, heterohexamer, formed by a dimer of trimers. The hexameric TusBCD complex contains 2 copies each of TusB, TusC and TusD. The TusBCD complex interacts with TusE.

It is found in the cytoplasm. In terms of biological role, part of a sulfur-relay system required for 2-thiolation of 5-methylaminomethyl-2-thiouridine (mnm(5)s(2)U) at tRNA wobble positions. Accepts sulfur from TusA and transfers it in turn to TusE. This Enterobacter sp. (strain 638) protein is Sulfurtransferase TusD.